A 485-amino-acid chain; its full sequence is Protein nucleotidyltransferase YdiU (485 aa).

ATP-binding residues include G90, G92, R93, K113, D125, G126, R176, and R183. Residue D252 is the Proton acceptor of the active site. Mg(2+) is bound by residues N253 and D262. D262 is a binding site for ATP.

It belongs to the SELO family. It depends on Mg(2+) as a cofactor. The cofactor is Mn(2+).

The catalysed reaction is L-seryl-[protein] + ATP = 3-O-(5'-adenylyl)-L-seryl-[protein] + diphosphate. It carries out the reaction L-threonyl-[protein] + ATP = 3-O-(5'-adenylyl)-L-threonyl-[protein] + diphosphate. It catalyses the reaction L-tyrosyl-[protein] + ATP = O-(5'-adenylyl)-L-tyrosyl-[protein] + diphosphate. The enzyme catalyses L-histidyl-[protein] + UTP = N(tele)-(5'-uridylyl)-L-histidyl-[protein] + diphosphate. The catalysed reaction is L-seryl-[protein] + UTP = O-(5'-uridylyl)-L-seryl-[protein] + diphosphate. It carries out the reaction L-tyrosyl-[protein] + UTP = O-(5'-uridylyl)-L-tyrosyl-[protein] + diphosphate. Functionally, nucleotidyltransferase involved in the post-translational modification of proteins. It can catalyze the addition of adenosine monophosphate (AMP) or uridine monophosphate (UMP) to a protein, resulting in modifications known as AMPylation and UMPylation. This is Protein nucleotidyltransferase YdiU from Aliivibrio fischeri (strain MJ11) (Vibrio fischeri).